A 131-amino-acid polypeptide reads, in one-letter code: Large ribosomal subunit protein bL17 (131 aa).

Belongs to the bacterial ribosomal protein bL17 family. As to quaternary structure, part of the 50S ribosomal subunit. Contacts protein L32.

The protein is Large ribosomal subunit protein bL17 of Cupriavidus pinatubonensis (strain JMP 134 / LMG 1197) (Cupriavidus necator (strain JMP 134)).